We begin with the raw amino-acid sequence, 309 residues long: Ribose-phosphate pyrophosphokinase (309 aa).

ATP contacts are provided by residues 42-44 (DEE) and 102-103 (RQ). Residues His-136 and Asp-175 each coordinate Mg(2+). Lys-199 is an active-site residue. D-ribose 5-phosphate is bound by residues Arg-201, Asp-226, and 230-234 (STGGT).

Belongs to the ribose-phosphate pyrophosphokinase family. Class III (archaeal) subfamily. Requires Mg(2+) as cofactor.

It localises to the cytoplasm. It catalyses the reaction D-ribose 5-phosphate + ATP = 5-phospho-alpha-D-ribose 1-diphosphate + AMP + H(+). It functions in the pathway metabolic intermediate biosynthesis; 5-phospho-alpha-D-ribose 1-diphosphate biosynthesis; 5-phospho-alpha-D-ribose 1-diphosphate from D-ribose 5-phosphate (route I): step 1/1. In terms of biological role, involved in the biosynthesis of the central metabolite phospho-alpha-D-ribosyl-1-pyrophosphate (PRPP) via the transfer of pyrophosphoryl group from ATP to 1-hydroxyl of ribose-5-phosphate (Rib-5-P). This chain is Ribose-phosphate pyrophosphokinase, found in Aeropyrum pernix (strain ATCC 700893 / DSM 11879 / JCM 9820 / NBRC 100138 / K1).